Reading from the N-terminus, the 275-residue chain is MTDDKDVLRDVWFGRIPTCFTLYQDEITEREAEPYYLLLPRVSYLTLVTDKVKKHFQKVMRQEDISEIWFEYEGTPLKWHYPIGLLFDLLASISALPWNITVHFKSFPEKDLLHCPSKDVIEAHFMSCVKEADALKHKSRVISDMQRKDHKQLWMGLQNDRFDQFWTINRKLIEYPPEENGFRYIPFRIYQTTTERPFIQKLFRPVAADGQLHTLGDLLREVCPSAVAPEDGEKKSQVMIHGIEPLLETPLQWLSEHLSYPDNFLHISIVPQPTD.

M1 is modified (N-acetylmethionine). A Glycyl lysine isopeptide (Lys-Gly) (interchain with G-Cter in ATG12) cross-link involves residue K130.

The protein belongs to the ATG5 family. As to quaternary structure, forms a conjugate with ATG12. Part of the minor complex composed of 4 sets of ATG12-ATG5 and ATG16L1 (400 kDa); this complex interacts with ATG3 leading to disruption of ATG7 interaction and promotion of ATG8-like proteins lipidation. Forms an 800-kDa complex composed of ATG12-ATG5 and ATG16L2. The ATG12-ATG5 conjugate interacts with RAB33A; this interaction is bridged by ATG16L1 and promotes ATG12-ATG5-ATG16L1 complex recruitment to phagophores. Interacts with TECPR1; the interaction is direct and does not take place when ATG16L1 is associated with the ATG5-ATG12 conjugate. Interacts with DHX58/RIG-1, IFIH1/MDA5 and MAVS/IPS-1 in monomeric form as well as in ATG12-ATG5 conjugate form. The interaction with MAVS is further enhanced upon vesicular stomatitis virus (VSV) infection. Interacts with ATG3. Interacts with ATG7 and ATG10. Interacts with FADD. Interacts with Bassoon/BSN; this interaction is important for the regulation of presynaptic autophagy. Interacts with ATG16L2. In terms of processing, conjugated to ATG12; which is essential for autophagy, but is not required for association with isolation membrane. Post-translationally, acetylated by EP300.

The protein resides in the cytoplasm. Its subcellular location is the preautophagosomal structure membrane. Involved in autophagic vesicle formation. Conjugation with ATG12, through a ubiquitin-like conjugating system involving ATG7 as an E1-like activating enzyme and ATG10 as an E2-like conjugating enzyme, is essential for its function. The ATG12-ATG5 conjugate acts as an E3-like enzyme which is required for lipidation of ATG8 family proteins and their association to the vesicle membranes. Involved in mitochondrial quality control after oxidative damage, and in subsequent cellular longevity. Plays a critical role in multiple aspects of lymphocyte development and is essential for both B and T lymphocyte survival and proliferation. Required for optimal processing and presentation of antigens for MHC II. Involved in the maintenance of axon morphology and membrane structures, as well as in normal adipocyte differentiation. Promotes primary ciliogenesis through removal of OFD1 from centriolar satellites and degradation of IFT20 via the autophagic pathway. As part of the ATG8 conjugation system with ATG12 and ATG16L1, required for recruitment of LRRK2 to stressed lysosomes and induction of LRRK2 kinase activity in response to lysosomal stress. Its function is as follows. May play an important role in the apoptotic process, possibly within the modified cytoskeleton. Its expression is a relatively late event in the apoptotic process, occurring downstream of caspase activity. Plays a crucial role in IFN-gamma-induced autophagic cell death by interacting with FADD. The protein is Autophagy protein 5 of Sus scrofa (Pig).